Reading from the N-terminus, the 331-residue chain is ADP-L-glycero-D-manno-heptose-6-epimerase (331 aa).

NADP(+) is bound by residues Phe11–Ile12, Asp32–Asn33, Lys39, Lys54, Leu75–Thr79, and Asn92. Residue Tyr139 is the Proton acceptor of the active site. An NADP(+)-binding site is contributed by Lys143. Asn168 lines the substrate pocket. The NADP(+) site is built by Val169 and Lys177. The Proton acceptor role is filled by Lys177. Residues Arg179, Gln186, Phe200–His203, His213, and Tyr292 contribute to the substrate site.

This sequence belongs to the NAD(P)-dependent epimerase/dehydratase family. HldD subfamily. Homopentamer. It depends on NADP(+) as a cofactor.

It catalyses the reaction ADP-D-glycero-beta-D-manno-heptose = ADP-L-glycero-beta-D-manno-heptose. Its pathway is nucleotide-sugar biosynthesis; ADP-L-glycero-beta-D-manno-heptose biosynthesis; ADP-L-glycero-beta-D-manno-heptose from D-glycero-beta-D-manno-heptose 7-phosphate: step 4/4. Its function is as follows. Catalyzes the interconversion between ADP-D-glycero-beta-D-manno-heptose and ADP-L-glycero-beta-D-manno-heptose via an epimerization at carbon 6 of the heptose. The chain is ADP-L-glycero-D-manno-heptose-6-epimerase from Cupriavidus pinatubonensis (strain JMP 134 / LMG 1197) (Cupriavidus necator (strain JMP 134)).